The chain runs to 549 residues: Exodeoxyribonuclease 7 large subunit (549 aa).

The disordered stretch occupies residues 511–549; it reads LVATDPPVDPKPTRKPVQKSSSPKPSSRKPKKSQQEDLF.

The protein belongs to the XseA family. In terms of assembly, heterooligomer composed of large and small subunits.

Its subcellular location is the cytoplasm. It carries out the reaction Exonucleolytic cleavage in either 5'- to 3'- or 3'- to 5'-direction to yield nucleoside 5'-phosphates.. In terms of biological role, bidirectionally degrades single-stranded DNA into large acid-insoluble oligonucleotides, which are then degraded further into small acid-soluble oligonucleotides. The polypeptide is Exodeoxyribonuclease 7 large subunit (Beijerinckia indica subsp. indica (strain ATCC 9039 / DSM 1715 / NCIMB 8712)).